Consider the following 159-residue polypeptide: Small ribosomal subunit protein uS17y (159 aa).

Belongs to the universal ribosomal protein uS17 family.

It is found in the cytoplasm. The sequence is that of Small ribosomal subunit protein uS17y (RPS11B) from Arabidopsis thaliana (Mouse-ear cress).